Consider the following 465-residue polypeptide: Cytochrome P450 85A2 (465 aa).

A helical transmembrane segment spans residues 2–22 (GIMMMILGLLVIIVCLCTALL). Position 415 (Cys-415) interacts with heme. Cys-462 is lipidated: S-farnesyl cysteine. The Farnesylation CAAX motif signature appears at 462–465 (CSPY).

It belongs to the cytochrome P450 family. Requires heme as cofactor. Isoprenylated (farnesylated); this addition of a 15-carbon farnesyl isoprenoid to the carboxy terminus is required for endoplasmic reticulum localization and essential for the biosynthesis of brassinolide. In terms of tissue distribution, expressed in stems, hypocotyls, leaves, siliques, shoots, and roots, with a higher expression in apical shoots.

It localises to the membrane. It is found in the endoplasmic reticulum. The catalysed reaction is 6-deoxoteasterone + reduced [NADPH--hemoprotein reductase] + O2 = 6alpha-hydroxyteasterone + oxidized [NADPH--hemoprotein reductase] + H2O + H(+). It carries out the reaction 6alpha-hydroxytyphasterol + reduced [NADPH--hemoprotein reductase] + O2 = teasterone + oxidized [NADPH--hemoprotein reductase] + 2 H2O + H(+). It catalyses the reaction 3-dehydro-6-deoxoteasterone + reduced [NADPH--hemoprotein reductase] + O2 = 3-dehydro-6alpha-hydroxyteasterone + oxidized [NADPH--hemoprotein reductase] + H2O + H(+). The enzyme catalyses 3-dehydro-6alpha-hydroxyteasterone + reduced [NADPH--hemoprotein reductase] + O2 = 3-dehydroteasterone + oxidized [NADPH--hemoprotein reductase] + 2 H2O + H(+). The catalysed reaction is 6-deoxotyphasterol + reduced [NADPH--hemoprotein reductase] + O2 = 6alpha-hydroxytyphasterol + oxidized [NADPH--hemoprotein reductase] + H2O + H(+). It carries out the reaction 6alpha-hydroxytyphasterol + reduced [NADPH--hemoprotein reductase] + O2 = typhasterol + oxidized [NADPH--hemoprotein reductase] + 2 H2O + H(+). It catalyses the reaction 6-deoxocastasterone + reduced [NADPH--hemoprotein reductase] + O2 = 6alpha-hydroxycastasterone + oxidized [NADPH--hemoprotein reductase] + H2O + H(+). The enzyme catalyses 6alpha-hydroxycastasterone + reduced [NADPH--hemoprotein reductase] + O2 = castasterone + oxidized [NADPH--hemoprotein reductase] + 2 H2O + H(+). The catalysed reaction is 6-deoxo-28-norteasterone + 2 reduced [NADPH--hemoprotein reductase] + 2 O2 = 28-norteasterone + 2 oxidized [NADPH--hemoprotein reductase] + 3 H2O + 2 H(+). It carries out the reaction 6-deoxo-28-norteasterone + reduced [NADPH--hemoprotein reductase] + O2 = 6alpha-hydroxy-28-norteasterone + oxidized [NADPH--hemoprotein reductase] + H2O + H(+). It catalyses the reaction 6alpha-hydroxy-28-norteasterone + reduced [NADPH--hemoprotein reductase] + O2 = 28-norteasterone + oxidized [NADPH--hemoprotein reductase] + 2 H2O + H(+). The enzyme catalyses 6-deoxo-28-nortyphasterol + 2 reduced [NADPH--hemoprotein reductase] + 2 O2 = 28-nortyphasterol + 2 oxidized [NADPH--hemoprotein reductase] + 3 H2O + 2 H(+). The catalysed reaction is 6-deoxo-28-nortyphasterol + reduced [NADPH--hemoprotein reductase] + O2 = 6alpha-hydroxy-28-nortyphasterol + oxidized [NADPH--hemoprotein reductase] + H2O + H(+). It carries out the reaction 6alpha-hydroxy-28-nortyphasterol + reduced [NADPH--hemoprotein reductase] + O2 = 28-nortyphasterol + oxidized [NADPH--hemoprotein reductase] + 2 H2O + H(+). It catalyses the reaction 6-deoxo-28-norcastasterone + 2 reduced [NADPH--hemoprotein reductase] + 2 O2 = 28-norcastasterone + 2 oxidized [NADPH--hemoprotein reductase] + 3 H2O + 2 H(+). The enzyme catalyses 6-deoxo-28-norcastasterone + reduced [NADPH--hemoprotein reductase] + O2 = 6alpha-hydroxy-28-norcastasterone + oxidized [NADPH--hemoprotein reductase] + H2O + H(+). The catalysed reaction is 6alpha-hydroxy-28-norcastasterone + reduced [NADPH--hemoprotein reductase] + O2 = 28-norcastasterone + oxidized [NADPH--hemoprotein reductase] + 2 H2O + H(+). It carries out the reaction 3-dehydro-6-deoxo-28-norteasterone + 2 reduced [NADPH--hemoprotein reductase] + 2 O2 = 6-dehydro-28-norteasterone + 2 oxidized [NADPH--hemoprotein reductase] + 3 H2O + 2 H(+). It catalyses the reaction 3-dehydro-6-deoxo-28-norteasterone + reduced [NADPH--hemoprotein reductase] + O2 = 3-dehydro-6alpha-hydroxy-28-norteasterone + oxidized [NADPH--hemoprotein reductase] + H2O + H(+). The enzyme catalyses 3-dehydro-6alpha-hydroxy-28-norteasterone + reduced [NADPH--hemoprotein reductase] + O2 = 6-dehydro-28-norteasterone + oxidized [NADPH--hemoprotein reductase] + 2 H2O + H(+). The catalysed reaction is teasterone + reduced [NADPH--hemoprotein reductase] + O2 = 7-oxateasterone + oxidized [NADPH--hemoprotein reductase] + H2O + H(+). It carries out the reaction castasterone + reduced [NADPH--hemoprotein reductase] + O2 = brassinolide + oxidized [NADPH--hemoprotein reductase] + H2O + H(+). It catalyses the reaction typhasterol + reduced [NADPH--hemoprotein reductase] + O2 = 7-oxatyphasterol + oxidized [NADPH--hemoprotein reductase] + H2O + H(+). The enzyme catalyses 6-deoxocastasterone + 2 reduced [NADPH--hemoprotein reductase] + 2 O2 = castasterone + 2 oxidized [NADPH--hemoprotein reductase] + 3 H2O + 2 H(+). The catalysed reaction is 6-deoxoteasterone + 2 reduced [NADPH--hemoprotein reductase] + 2 O2 = teasterone + 2 oxidized [NADPH--hemoprotein reductase] + 3 H2O + 2 H(+). It carries out the reaction 6-deoxotyphasterol + 2 reduced [NADPH--hemoprotein reductase] + 2 O2 = typhasterol + 2 oxidized [NADPH--hemoprotein reductase] + 3 H2O + 2 H(+). It catalyses the reaction 3-dehydro-6-deoxoteasterone + 2 reduced [NADPH--hemoprotein reductase] + 2 O2 = 3-dehydroteasterone + 2 oxidized [NADPH--hemoprotein reductase] + 3 H2O + 2 H(+). It participates in plant hormone biosynthesis; brassinosteroid biosynthesis. Its function is as follows. Mediates Baeyer-Villiger oxidation and catalyzes the C6-oxidation step and lactonization in brassinosteroids biosynthesis. Converts 6-deoxocastasterone (6-deoxoCS) to castasterone (CS), and castasterone to brassinolide (BL). May also convert 6-deoxoteasterone (6-deoxoTE) to teasterone (TE), 3-dehydro-6-deoxoteasterone (6-deoxo3DT, 6-deoxo-3-DHT) to 3-dehydroteasterone (3DT, 3-DHT), and 6-deoxotyphasterol (6-deoxoTY) to typhasterol (TY). Also seems to be able to convert teasterone (TE) and typhasterol (TY) to 7-oxateasterone (7-OXTE) and 7-oxatyphasterol (7-OXTY), respectively. Catalyzes the conversion of 6-deoxo-28-norteasterone (6-deoxo-28-norTE) to 28-norteasterone (28-norTE), 6-deoxo-28-nordeoxoteasterone (6-deoxo-28-nor-3-DHT) to 28-nordeoxoteasterone (28-nor-3-DHT), 6-deoxo-28-nortyphasterol (6-deoxo-28-norTY) to 28-nortyphasterol (28-norTY) and 6-deoxo-28-norcastasterone (6-deoxo-28-norCS) to 28-norcastasterone (28-norCS). Involved in a negative regulation of responses to abscisic acid (ABA) and drought tolerance. In Arabidopsis thaliana (Mouse-ear cress), this protein is Cytochrome P450 85A2 (CYP85A2).